A 271-amino-acid chain; its full sequence is 2-dehydro-3-deoxyphosphooctonate aldolase (271 aa).

This sequence belongs to the KdsA family.

The protein resides in the cytoplasm. It carries out the reaction D-arabinose 5-phosphate + phosphoenolpyruvate + H2O = 3-deoxy-alpha-D-manno-2-octulosonate-8-phosphate + phosphate. It functions in the pathway carbohydrate biosynthesis; 3-deoxy-D-manno-octulosonate biosynthesis; 3-deoxy-D-manno-octulosonate from D-ribulose 5-phosphate: step 2/3. The protein operates within bacterial outer membrane biogenesis; lipopolysaccharide biosynthesis. The protein is 2-dehydro-3-deoxyphosphooctonate aldolase of Campylobacter jejuni subsp. jejuni serotype O:23/36 (strain 81-176).